Consider the following 112-residue polypeptide: Inner membrane assembly complex subunit 17 (112 aa).

A mitochondrion-targeting transit peptide spans 1–24 (MLRKLPINFAKWTVKKVPVQQKRF). The Mitochondrial matrix segment spans residues 25–44 (NSQQKEISPHIMFYKNYARP). A helical transmembrane segment spans residues 45 to 62 (LGKVTLFALATYYGLEIV). Residues 63-112 (WWKLDASEQEAIKNSKLLICESSFSLLTFRRITEFRECEIKTRDLYDPEI) are Mitochondrial intermembrane-facing.

Belongs to the INA17 family. Component of the inner membrane assembly (INA) complex. Interacts with a subset of F(1)F(0)-ATP synthase subunits of the F(1)-domain and the peripheral stalk.

The protein resides in the mitochondrion inner membrane. Its function is as follows. Component of the INA complex (INAC) that promotes the biogenesis of mitochondrial F(1)F(0)-ATP synthase. INAC facilitates the assembly of the peripheral stalk and promotes the assembly of the catalytic F(1)-domain with the membrane-embedded F(0)-domain. The protein is Inner membrane assembly complex subunit 17 of Schizosaccharomyces pombe (strain 972 / ATCC 24843) (Fission yeast).